A 483-amino-acid polypeptide reads, in one-letter code: Glutamyl-tRNA(Gln) amidotransferase subunit A (483 aa).

Active-site charge relay system residues include Lys76 and Ser151. Ser175 acts as the Acyl-ester intermediate in catalysis.

This sequence belongs to the amidase family. GatA subfamily. Heterotrimer of A, B and C subunits.

It catalyses the reaction L-glutamyl-tRNA(Gln) + L-glutamine + ATP + H2O = L-glutaminyl-tRNA(Gln) + L-glutamate + ADP + phosphate + H(+). Functionally, allows the formation of correctly charged Gln-tRNA(Gln) through the transamidation of misacylated Glu-tRNA(Gln) in organisms which lack glutaminyl-tRNA synthetase. The reaction takes place in the presence of glutamine and ATP through an activated gamma-phospho-Glu-tRNA(Gln). In Chromobacterium violaceum (strain ATCC 12472 / DSM 30191 / JCM 1249 / CCUG 213 / NBRC 12614 / NCIMB 9131 / NCTC 9757 / MK), this protein is Glutamyl-tRNA(Gln) amidotransferase subunit A.